The chain runs to 428 residues: C4-dicarboxylate transport protein (428 aa).

8 helical membrane passes run 8–28 (SLYF…HFYP), 44–64 (LIKM…IAGM), 76–96 (VALL…LIIV), 142–162 (IGAF…LFGF), 184–204 (VIFG…FGAM), 222–242 (LIIC…GSIA), 326–346 (IVHQ…AAGV), and 352–372 (IVLA…LALI).

It belongs to the dicarboxylate/amino acid:cation symporter (DAACS) (TC 2.A.23) family.

It localises to the cell inner membrane. Its function is as follows. Responsible for the transport of dicarboxylates such as succinate, fumarate, and malate from the periplasm across the membrane. The protein is C4-dicarboxylate transport protein of Shigella dysenteriae serotype 1 (strain Sd197).